Here is a 451-residue protein sequence, read N- to C-terminus: GTPase Der (451 aa).

2 consecutive EngA-type G domains span residues 5–170 (PVVA…VEPE) and 186–359 (IKLA…AAAF). GTP-binding positions include 11–18 (GRPNVGKS), 58–62 (DTGGF), 122–125 (NKAE), 192–199 (GRPNVGKS), 239–243 (DTAGL), and 304–307 (NKWD). Positions 360 to 444 (AKLSTPKLTR…PLRIEFKSSR (85 aa)) constitute a KH-like domain.

The protein belongs to the TRAFAC class TrmE-Era-EngA-EngB-Septin-like GTPase superfamily. EngA (Der) GTPase family. In terms of assembly, associates with the 50S ribosomal subunit.

In terms of biological role, GTPase that plays an essential role in the late steps of ribosome biogenesis. In Bordetella petrii (strain ATCC BAA-461 / DSM 12804 / CCUG 43448), this protein is GTPase Der.